Consider the following 158-residue polypeptide: Snaclec agglucetin subunit alpha-2 (158 aa).

A signal peptide spans 1-23 (MGRFIFVSFGLLVVFLSLSGTGA). Cystine bridges form between C27-C38, C55-C152, and C127-C144. The 120-residue stretch at 34–153 (YDQYCYQVIK…CIQLNPFVCK (120 aa)) folds into the C-type lectin domain.

It belongs to the snaclec family. In terms of assembly, heterotetramer of the subunits alpha-1, alpha-2, beta-1 and beta-2; disulfide-linked. As to expression, expressed by the venom gland.

The protein resides in the secreted. Agglucetin specifically causes platelet aggregation and surface exposure of integrin alpha-IIb/beta-3 with a GPIb-(GP1BA-) dependent manner in washed platelets. It binds to human platelets in a saturable manner, and its binding is specifically blocked by anti-GP Ib mAb. It regulates endothelial cell survival and promotes angiogenesis by activating integrin alpha-v/beta-3 signaling through FAK/phosphatidylinositol 3-kinase (PI3K)/Akt pathway. This Deinagkistrodon acutus (Hundred-pace snake) protein is Snaclec agglucetin subunit alpha-2.